A 249-amino-acid polypeptide reads, in one-letter code: MAARRSQRRRGRRGEPGTALLAPLVLSLGLALACLGLLLVVVSLGSWATLSAQEPSQEELTAEDRREPPELNPQTEESQDVVPFLEQLVRPRRSAPKGRKARPRRAIAAHYEVHPRPGQDGAQAGVDGTVSGWEETKINSSSPLRYDRQIGEFTVIRAGLYYLYCQVHFDEGKAVYLKLDLLVNGVLALRCLEEFSATAASSPGPQLRLCQVSGLLPLRPGSSLRIRTLPWAHLKAAPFLTYFGLFQVH.

The Cytoplasmic portion of the chain corresponds to 1–21; that stretch reads MAARRSQRRRGRRGEPGTALL. Residues 22-45 traverse the membrane as a helical; Signal-anchor for type II membrane protein segment; it reads APLVLSLGLALACLGLLLVVVSLG. Residues 46–249 lie on the Extracellular side of the membrane; it reads SWATLSAQEP…LTYFGLFQVH (204 aa). Residues 52–78 are disordered; the sequence is AQEPSQEELTAEDRREPPELNPQTEES. The THD domain occupies 107-248; the sequence is IAAHYEVHPR…FLTYFGLFQV (142 aa). Residue Asn139 is glycosylated (N-linked (GlcNAc...) asparagine). Cys191 and Cys210 are joined by a disulfide.

The protein belongs to the tumor necrosis factor family. In terms of assembly, homotrimer. Interacts with the angiogenic factor AGGF1/VG5Q. In terms of processing, the soluble form is produced from the membrane form by proteolytic processing. As to expression, widely expressed.

It is found in the cell membrane. The protein localises to the secreted. In terms of biological role, binds to FN14 and possibly also to TNRFSF12/APO3. Weak inducer of apoptosis in some cell types. Mediates NF-kappa-B activation. Promotes angiogenesis and the proliferation of endothelial cells. Also involved in induction of inflammatory cytokines. Promotes IL8 secretion. In Mus musculus (Mouse), this protein is Tumor necrosis factor ligand superfamily member 12 (Tnfsf12).